Reading from the N-terminus, the 150-residue chain is Multiprotein-bridging factor 1 (150 aa).

The tract at residues 36–71 is disordered; sequence SSESKGAGQSKGPADHQRIAKLDRDDAPKPPEKVSA. A compositionally biased stretch (basic and acidic residues) spans 48 to 70; the sequence is PADHQRIAKLDRDDAPKPPEKVS. In terms of domain architecture, HTH cro/C1-type spans 84–137; it reads IKNAEGKSMTQKELATSVNAKPQDIADLESGRAVPDQALLGKLERKLNVKLRGA. Positions 94 to 113 form a DNA-binding region, H-T-H motif; it reads QKELATSVNAKPQDIADLES.

This sequence belongs to the MBF1 family.

Its function is as follows. Transcriptional coactivator that stimulates GCN4-dependent transcriptional activity by bridging the DNA-binding region of GCN4 and TBP (SPT15), thereby recruiting TBP to GCN4-bound promoters. Involved in induction of the ribosome quality control (RQC) pathway; a pathway that degrades nascent peptide chains during problematic translation. Required to prevent stalled ribosomes from frameshifting. The polypeptide is Multiprotein-bridging factor 1 (MBF1) (Cryptococcus neoformans var. neoformans serotype D (strain B-3501A) (Filobasidiella neoformans)).